Consider the following 494-residue polypeptide: Cytochrome P450 71D94 (494 aa).

The helical; Signal-anchor for type II membrane protein transmembrane segment at Met1–Leu21 threads the bilayer. Cys434 provides a ligand contact to heme.

This sequence belongs to the cytochrome P450 family. It depends on heme as a cofactor.

Its subcellular location is the endoplasmic reticulum membrane. In terms of biological role, cytochrome P450 oxygenase of undefined substrate. Not active with limonene, (+)- or (-)-piperitone, (-)-isopiperitone, piperitenone or (+)-pulegone. The protein is Cytochrome P450 71D94 (CYP71D94) of Mentha gracilis (Gingermint).